The sequence spans 267 residues: MPRSCCSRSGALLLALLLQASMEVRGWCLESSQCQDLTTESNLLECIRACKPDLSAETPMFPGNGDEQPLTENPRKYVMGHFRWDRFGRRNSSSSGSSGAGQKREDVSAGEDCGPLPEGGPEPRSDGAKPGPREGKRSYSMEHFRWGKPVGKKRRPVKVYPNGAEDESAEAFPLEFKRELTGQRLREGDGPDGPADDGAGAQADLEHSLLVAAEKKDEGPYRMEHFRWGSPPKDKRYGGFMTSEKSQTPLVTLFKNAIIKNAYKKGE.

An N-terminal signal peptide occupies residues 1–26 (MPRSCCSRSGALLLALLLQASMEVRG). A disulfide bridge links Cys-28 with Cys-50. Thr-71 is a glycosylation site (O-linked (HexNAc...) threonine). Residue Phe-87 is modified to Phenylalanine amide. Disordered stretches follow at residues 88 to 175 (GRRN…FPLE), 181 to 200 (TGQR…DGAG), and 222 to 241 (RMEH…GGFM). N-linked (GlcNAc...) asparagine glycosylation occurs at Asn-91. Residues 121–145 (PEPRSDGAKPGPREGKRSYSMEHFR) show a composition bias toward basic and acidic residues. Glu-134 is modified (glutamic acid 1-amide). The residue at position 138 (Ser-138) is an N-acetylserine; in Corticotropin. Valine amide is present on Val-150. At Ser-168 the chain carries Phosphoserine. Positions 222–237 (RMEHFRWGSPPKDKRY) are enriched in basic and acidic residues.

Belongs to the POMC family. Specific enzymatic cleavages at paired basic residues yield the different active peptides. Post-translationally, O-glycosylated; reducing sugar is probably N-acetylgalactosamine. As to expression, ACTH and MSH are produced by the pituitary gland.

The protein resides in the secreted. Stimulates the adrenal glands to release cortisol. Its function is as follows. Anorexigenic peptide. Increases the pigmentation of skin by increasing melanin production in melanocytes. In terms of biological role, increases the pigmentation of skin by increasing melanin production in melanocytes. Functionally, endogenous orexigenic opiate. Endogenous opiate. This Homo sapiens (Human) protein is Pro-opiomelanocortin (POMC).